Consider the following 628-residue polypeptide: MTDNNHEHKQPLPSLAIAAIGVVFGDIGTSPLYSLKEAFSPSHGIPLTDQSILGVISLLFWAIVIVVGVKYVLFVMRADNNGEGGVLALMALALRSLDEKSKMAGLLMMLGIFGACMFYGDAVITPAISVISAVEGLEIAAPHLSHLVLPLTIVILILLFWIQRHGTAMVGRLFGPIMVLWFVVLAALGLWHILQSPSVIRALNPCYAYTFMAAHVLQAYVVLGSVVLVLTGAEALYADMGHFGAKPIRMAWYVLVMPSLVLNYFGQGALLMHDPKAIENPFFLLAPDWALLPLVVLSTIATVIASQAVISGAYSLTSQAIQLGYVPRMKILHTSELAIGQIYVPVVNWMLLFIILCIVIAFKSSDNLAAAYGIAVTATMVITTILACVVMVKVWNWNKLLVALIIGVFMTVDLGFFGANLLKVEEGGWLPLGIGALLFFLLMTWYKGRMIVKERTAADGIPLMPFLQGLLAHPPHRVSGTAIYLTGSDSLVPVSLLHNLKHNKVLHERTIFLTFVTRDIPYVNDADRVTVKDIDGGLYLVKAAYGFNETPDVKAVLLEVGRTHDMTFELMDTSFFLARETVVPTQLPGMSVWRERVFAWMHQNAAKPTDFFSIPANRVVELGTKIEI.

The next 12 membrane-spanning stretches (helical) occupy residues 15 to 35 (LAIA…LYSL), 55 to 75 (VISL…VLFV), 104 to 124 (AGLL…DAVI), 142 to 162 (PHLS…LFWI), 173 to 193 (LFGP…LWHI), 210 to 230 (TFMA…VLVL), 252 to 272 (WYVL…ALLM), 281 to 301 (PFFL…STIA), 342 to 362 (IYVP…VIAF), 372 to 392 (YGIA…VVMV), 400 to 420 (LLVA…FGAN), and 426 to 446 (EGGW…MTWY).

It belongs to the HAK/KUP transporter (TC 2.A.72) family.

It localises to the cell inner membrane. The enzyme catalyses K(+)(in) + H(+)(in) = K(+)(out) + H(+)(out). Functionally, transport of potassium into the cell. Likely operates as a K(+):H(+) symporter. This chain is Probable potassium transport system protein Kup, found in Paraburkholderia xenovorans (strain LB400).